The sequence spans 842 residues: Transient receptor potential cation channel subfamily V member 1 (842 aa).

A disordered region spans residues 1–64; that stretch reads MKRWVSLDSG…DSEETSPMDC (64 aa). Residues 1–435 are Cytoplasmic-facing; the sequence is MKRWVSLDSG…QDKWDRVVKR (435 aa). Residues 10–21 show a composition bias toward acidic residues; sequence GESEDPLPEDTC. An ANK 1 repeat occupies 113–141; sequence KLYDRRRIFEAVAQNNCQELESLLCFLQR. Position 118 (Arg118) interacts with ATP. At Thr147 the chain carries Phosphothreonine; by PKA; in vitro. The stretch at 156–188 is one ANK 2 repeat; that stretch reads TGKTCLLKAMLNLHSGQNDTIPLLLEIARQTDS. ATP-binding positions include Lys158, Lys163, Asn167, 202 to 205, and 213 to 214; these read YKGQ and ER. ANK repeat units follow at residues 206–231, 252–279, 288–324, and 338–361; these read TALH…ADVQ, ELPL…QPAD, NTVL…KLHP, and TPLA…REIL. At Thr373 the chain carries Phosphothreonine; by PKA; in vitro. An ANK 7 repeat occupies 396 to 418; that stretch reads NSVLEVIAYSSSETPNRHDMLLV. Residues 436-457 traverse the membrane as a helical segment; sequence IFYFNFFVYCLYMIIFTTAAYY. The Extracellular segment spans residues 458–475; sequence RPVDGLPPYKLRNLPGDY. Residues 476 to 500 traverse the membrane as a helical segment; that stretch reads FRVTGEILSVAGGVYFFFRGIQYFL. At 501-513 the chain is on the cytoplasmic side; sequence QRRPSMKALFVDS. At Ser505 the chain carries Phosphoserine; by PKC/PRKCE. 514–515 contributes to the resiniferatoxin binding site; that stretch reads YS. The helical transmembrane segment at 514-535 threads the bilayer; sequence YSEMLFFVQALFMLATVVLYFS. Residues 536–538 are Extracellular-facing; the sequence is HCK. The helical transmembrane segment at 539-559 threads the bilayer; it reads EYVATMVFSLALGWINMLYYT. Arg560 is a resiniferatoxin binding site. Residues 560–562 are Cytoplasmic-facing; the sequence is RGF. Residues 563–601 traverse the membrane as a helical segment; the sequence is QQMGIYAVMIEKMILRDLCRFMFVYLVFLFGFSTAVVTL. The Extracellular segment spans residues 602–633; sequence IEDGKNSSTSAESTSHRWRGFGCRSSDSSYNS. Residue Asn607 is glycosylated (N-linked (GlcNAc...) asparagine). An intramembrane region (pore-forming) is located at residues 634 to 655; sequence LYSTCLELFKFTIGMGDLEFTE. Gly647 provides a ligand contact to Na(+). A Selectivity filter motif is present at residues 647-650; it reads GMGD. A Ca(2+)-binding site is contributed by Asp650. The Extracellular segment spans residues 656-659; that stretch reads NYDF. The chain crosses the membrane as a helical span at residues 660–686; the sequence is KAVFIILLLAYVILTYILLLNMLIALM. Topologically, residues 687–842 are cytoplasmic; it reads GETVNKIAQE…FKDSVAAAEK (156 aa). Residues 688-716 form an AD region; sequence ETVNKIAQESKSIWKLQRAITILDTEKGF. Thr708 bears the Phosphothreonine mark. An interaction with calmodulin region spans residues 771 to 805; it reads EGVKRTLSFSLRSGRVSGRNWKNFALVPLLRDAST. Ser778 carries the phosphoserine modification. Positions 781-796 are required for PIP2-mediated channel inhibition; sequence LRSGRVSGRNWKNFAL. Residue Ser804 is modified to Phosphoserine; by PKC/PRKCE and PKC/PRKCZ. Ser824 is subject to Phosphoserine.

The protein belongs to the transient receptor (TC 1.A.4) family. TrpV subfamily. TRPV1 sub-subfamily. In terms of assembly, homotetramer. Interacts with PIRT. May also form a heteromeric channel with TRPV3. Interacts with CALM, PRKCM and CSK. Interacts with PRKCG and NTRK1, probably by forming a trimeric complex. Interacts with the Scolopendra mutilans RhTx toxin. Interacts with TMEM100. Interacts with PACS2. In terms of processing, phosphorylation by PKA reverses capsaicin-induced dephosphorylation at multiple sites. Phosphorylation by CAMKII seems to regulate binding to vanilloids. Phosphorylated and modulated by PRKCE, PRKCM and probably PRKCZ. Dephosphorylation by calcineurin seems to lead to receptor desensitization and phosphorylation by CAMKII recovers activity.

It is found in the postsynaptic cell membrane. The protein resides in the cell projection. Its subcellular location is the dendritic spine membrane. It localises to the cell membrane. The enzyme catalyses Ca(2+)(in) = Ca(2+)(out). It carries out the reaction Mg(2+)(in) = Mg(2+)(out). The catalysed reaction is Na(+)(in) = Na(+)(out). It catalyses the reaction K(+)(in) = K(+)(out). The channel is sensitized by ATP binding. Repeated stimulation with capsaicin gives rise to progressively smaller responses, due to desensitization. This desensitization is triggered by the influx of calcium ions and is inhibited by elevated ATP levels. Ca(2+) and CALM displace ATP from its binding site and trigger a conformation change that leads to a closed, desensitized channel. The double-knot toxin (DkTx) from the Chinese earth tiger tarantula activates the channel and traps it in an open conformation. The Scolopendra mutilans RhTx toxin potentiates the heat activation pathway mediated by this channel by binding to the charge-rich outer pore region (in an activated state). Channel activity is activated via the interaction with PIRT and phosphatidylinositol 4,5-bisphosphate (PIP2). Both PIRT and PIP2 are required to activate channel activity. Intracellular PIP2 inhibits desensitization. Its function is as follows. Non-selective calcium permeant cation channel involved in detection of noxious chemical and thermal stimuli. Seems to mediate proton influx and may be involved in intracellular acidosis in nociceptive neurons. Involved in mediation of inflammatory pain and hyperalgesia. Sensitized by a phosphatidylinositol second messenger system activated by receptor tyrosine kinases, which involves PKC isozymes and PCL. Activation by vanilloids, like capsaicin, and temperatures higher than 42 degrees Celsius. Upon activation, exhibits a time- and Ca(2+)-dependent outward rectification, followed by a long-lasting refractory state. Mild extracellular acidic pH (6.5) potentiates channel activation by noxious heat and vanilloids, whereas acidic conditions (pH &lt;6) directly activate the channel. Can be activated by endogenous compounds, including 12-hydroperoxytetraenoic acid and bradykinin. Acts as ionotropic endocannabinoid receptor with central neuromodulatory effects. Triggers a form of long-term depression (TRPV1-LTD) mediated by the endocannabinoid anandamine in the hippocampus and nucleus accumbens by affecting AMPA receptors endocytosis. The protein is Transient receptor potential cation channel subfamily V member 1 (Trpv1) of Oryctolagus cuniculus (Rabbit).